The chain runs to 152 residues: Endoribonuclease YbeY (152 aa).

3 residues coordinate Zn(2+): His113, His117, and His123.

Belongs to the endoribonuclease YbeY family. Zn(2+) is required as a cofactor.

It localises to the cytoplasm. Single strand-specific metallo-endoribonuclease involved in late-stage 70S ribosome quality control and in maturation of the 3' terminus of the 16S rRNA. The sequence is that of Endoribonuclease YbeY from Janthinobacterium sp. (strain Marseille) (Minibacterium massiliensis).